Reading from the N-terminus, the 366-residue chain is Carbamoyl phosphate synthase small chain (366 aa).

The interval 1–171 (MQSKRYLVLE…KTPYVSTGKD (171 aa)) is CPSase. Residues serine 47, glycine 221, and glycine 223 each coordinate L-glutamine. Residues 173–360 (SVVLVDFGKK…VAMMTNFKEK (188 aa)) enclose the Glutamine amidotransferase type-1 domain. Cysteine 248 functions as the Nucleophile in the catalytic mechanism. Residues leucine 249, glutamine 252, asparagine 290, glycine 292, and tyrosine 293 each contribute to the L-glutamine site. Active-site residues include histidine 333 and glutamate 335.

Belongs to the CarA family. Composed of two chains; the small (or glutamine) chain promotes the hydrolysis of glutamine to ammonia, which is used by the large (or ammonia) chain to synthesize carbamoyl phosphate. Tetramer of heterodimers (alpha,beta)4.

It carries out the reaction hydrogencarbonate + L-glutamine + 2 ATP + H2O = carbamoyl phosphate + L-glutamate + 2 ADP + phosphate + 2 H(+). It catalyses the reaction L-glutamine + H2O = L-glutamate + NH4(+). Its pathway is amino-acid biosynthesis; L-arginine biosynthesis; carbamoyl phosphate from bicarbonate: step 1/1. The protein operates within pyrimidine metabolism; UMP biosynthesis via de novo pathway; (S)-dihydroorotate from bicarbonate: step 1/3. In terms of biological role, small subunit of the glutamine-dependent carbamoyl phosphate synthetase (CPSase). CPSase catalyzes the formation of carbamoyl phosphate from the ammonia moiety of glutamine, carbonate, and phosphate donated by ATP, constituting the first step of 2 biosynthetic pathways, one leading to arginine and/or urea and the other to pyrimidine nucleotides. The small subunit (glutamine amidotransferase) binds and cleaves glutamine to supply the large subunit with the substrate ammonia. In Staphylococcus aureus (strain COL), this protein is Carbamoyl phosphate synthase small chain.